The primary structure comprises 205 residues: Outer-membrane lipoprotein LolB (205 aa).

The first 17 residues, 1-17 (MFLRHCITFTMIALLAG), serve as a signal peptide directing secretion. Cys18 carries the N-palmitoyl cysteine lipid modification. A lipid anchor (S-diacylglycerol cysteine) is attached at Cys18.

The protein belongs to the LolB family. Monomer.

It localises to the cell outer membrane. Plays a critical role in the incorporation of lipoproteins in the outer membrane after they are released by the LolA protein. This chain is Outer-membrane lipoprotein LolB, found in Pseudomonas putida (strain ATCC 700007 / DSM 6899 / JCM 31910 / BCRC 17059 / LMG 24140 / F1).